The following is a 442-amino-acid chain: ATP-dependent protease ATPase subunit HslU (442 aa).

ATP is bound by residues Ile18, 60–65 (GVGKTE), Asp255, Glu320, and Arg392.

It belongs to the ClpX chaperone family. HslU subfamily. As to quaternary structure, a double ring-shaped homohexamer of HslV is capped on each side by a ring-shaped HslU homohexamer. The assembly of the HslU/HslV complex is dependent on binding of ATP.

It is found in the cytoplasm. Its function is as follows. ATPase subunit of a proteasome-like degradation complex; this subunit has chaperone activity. The binding of ATP and its subsequent hydrolysis by HslU are essential for unfolding of protein substrates subsequently hydrolyzed by HslV. HslU recognizes the N-terminal part of its protein substrates and unfolds these before they are guided to HslV for hydrolysis. This chain is ATP-dependent protease ATPase subunit HslU, found in Hahella chejuensis (strain KCTC 2396).